The primary structure comprises 912 residues: Eukaryotic translation initiation factor 3 subunit C (912 aa).

The tract at residues 1-44 is disordered; sequence MSRFFTTGSDSESESSLSGEELVTKPVGGNYGKQPLLLSEDEED. Residues 8–21 show a composition bias toward low complexity; the sequence is GSDSESESSLSGEE. A phosphoserine mark is found at S9, S11, S13, S15, S16, S18, and S39. Residue K99 is modified to N6-acetyllysine. Disordered stretches follow at residues 157–305 and 521–541; these read TNYK…RVRG and QLTPPEGSSKSEQDQAENEGE. Residues S166, S178, S181, and S182 each carry the phosphoserine modification. Residues 166–190 show a composition bias toward acidic residues; that stretch reads SADEDAEKNEEDSEGSSDEDEDDDG. Basic and acidic residues predominate over residues 199–215; it reads KKSEAPSGDSRKFLKKE. Over residues 216–229 the composition is skewed to acidic residues; sequence DEDEDSEESEDSEA. Over residues 260–277 the composition is skewed to basic and acidic residues; the sequence is PTTEEDKKAAEKKREDKA. Polar residues predominate over residues 521-530; it reads QLTPPEGSSK. T523 is subject to Phosphothreonine. K642 carries the post-translational modification N6-acetyllysine. Residues 672 to 848 form the PCI domain; it reads FHLHINLELL…QTVVMHRTEP (177 aa). The interval 884-912 is disordered; it reads FRDQKDGYRKNEGYMRRGGYRQQQSQTAY. Over residues 885-898 the composition is skewed to basic and acidic residues; it reads RDQKDGYRKNEGYM. Residue S908 is modified to Phosphoserine.

It belongs to the eIF-3 subunit C family. As to quaternary structure, component of the eukaryotic translation initiation factor 3 (eIF-3) complex, which is composed of 13 subunits: EIF3A, EIF3B, EIF3C, EIF3D, EIF3E, EIF3F, EIF3G, EIF3H, EIF3I, EIF3J, EIF3K, EIF3L and EIF3M. The eIF-3 complex appears to include 3 stable modules: module A is composed of EIF3A, EIF3B, EIF3G and EIF3I; module B is composed of EIF3F, EIF3H, and EIF3M; and module C is composed of EIF3C, EIF3D, EIF3E, EIF3K and EIF3L. EIF3C of module C binds EIF3B of module A and EIF3H of module B, thereby linking the three modules. EIF3J is a labile subunit that binds to the eIF-3 complex via EIF3B. The eIF-3 complex interacts with RPS6KB1 under conditions of nutrient depletion. Mitogenic stimulation leads to binding and activation of a complex composed of MTOR and RPTOR, leading to phosphorylation and release of RPS6KB1 and binding of EIF4B to eIF-3. Identified in a HCV IRES-mediated translation complex, at least composed of EIF3C, IGF2BP1, RPS3 and HCV RNA-replicon. Interacts with ALKBH4, IFIT1 and IFIT2. Interacts with BZW2/5MP1. In terms of processing, phosphorylated. Phosphorylation is enhanced upon serum stimulation.

It is found in the cytoplasm. Component of the eukaryotic translation initiation factor 3 (eIF-3) complex, which is required for several steps in the initiation of protein synthesis. The eIF-3 complex associates with the 40S ribosome and facilitates the recruitment of eIF-1, eIF-1A, eIF-2:GTP:methionyl-tRNAi and eIF-5 to form the 43S pre-initiation complex (43S PIC). The eIF-3 complex stimulates mRNA recruitment to the 43S PIC and scanning of the mRNA for AUG recognition. The eIF-3 complex is also required for disassembly and recycling of post-termination ribosomal complexes and subsequently prevents premature joining of the 40S and 60S ribosomal subunits prior to initiation. The eIF-3 complex specifically targets and initiates translation of a subset of mRNAs involved in cell proliferation, including cell cycling, differentiation and apoptosis, and uses different modes of RNA stem-loop binding to exert either translational activation or repression. This Bos taurus (Bovine) protein is Eukaryotic translation initiation factor 3 subunit C.